The chain runs to 128 residues: 3-aminoacrylate deaminase RutC (128 aa).

The protein belongs to the RutC family. Homotrimer.

The catalysed reaction is (Z)-3-aminoacrylate + H2O + H(+) = 3-oxopropanoate + NH4(+). In terms of biological role, involved in pyrimidine catabolism. Catalyzes the deamination of 3-aminoacrylate to malonic semialdehyde, a reaction that can also occur spontaneously. RutC may facilitate the reaction and modulate the metabolic fitness, rather than catalyzing essential functions. The chain is 3-aminoacrylate deaminase RutC from Escherichia coli O103:H2 (strain 12009 / EHEC).